The chain runs to 131 residues: Predicted GPI-anchored protein 26 (131 aa).

Residues 1-18 (MHFSKIIAGSALSSVALA) form the signal peptide. 2 N-linked (GlcNAc...) asparagine glycosylation sites follow: Asn-22 and Asn-104. The GPI-anchor amidated glycine moiety is linked to residue Gly-110. Positions 111–131 (AGSKNVASALVGVVAIAAAMM) are cleaved as a propeptide — removed in mature form.

Its subcellular location is the cell membrane. Its function is as follows. GPI-anchored protein involved in proper cell wall integrity. Does not seem to be directly involved in the synthesis of the cell wall. Required for normal virulence in a mouse model of disseminated candidiasis. The sequence is that of Predicted GPI-anchored protein 26 (PGA26) from Candida albicans (strain SC5314 / ATCC MYA-2876) (Yeast).